A 240-amino-acid chain; its full sequence is GATA transcription factor 4 (240 aa).

The segment at 104 to 124 (ISFTGKPRSRRSRAPAPSVAG) is disordered. The Nuclear localization signal signature appears at 109–116 (KPRSRRSR). Residues 154–208 (ADGARRCTHCASEKTPQWRTGPLGPKTLCNACGVRYKSGRLVPEYRPASSPTFVL) form a GATA-type zinc finger.

The protein belongs to the type IV zinc-finger family. Class A subfamily. In terms of tissue distribution, expressed in roots, flowers and leaves, and to a lower extent in stems.

It is found in the nucleus. In terms of biological role, transcriptional activator that specifically binds 5'-GATA-3' or 5'-GAT-3' motifs within gene promoters. May be involved in the regulation of some light-responsive genes. This is GATA transcription factor 4 (GATA4) from Arabidopsis thaliana (Mouse-ear cress).